Here is a 669-residue protein sequence, read N- to C-terminus: DNA ligase (669 aa).

Residues 34–38 (DAEYD), 83–84 (SL), and Glu114 contribute to the NAD(+) site. Lys116 acts as the N6-AMP-lysine intermediate in catalysis. Positions 137, 171, 287, and 311 each coordinate NAD(+). Zn(2+) is bound by residues Cys405, Cys408, Cys423, and Cys428. Residues 591–669 (NVESYFAGKT…EERFLQELNK (79 aa)) form the BRCT domain.

Belongs to the NAD-dependent DNA ligase family. LigA subfamily. Mg(2+) serves as cofactor. Mn(2+) is required as a cofactor.

It catalyses the reaction NAD(+) + (deoxyribonucleotide)n-3'-hydroxyl + 5'-phospho-(deoxyribonucleotide)m = (deoxyribonucleotide)n+m + AMP + beta-nicotinamide D-nucleotide.. Functionally, DNA ligase that catalyzes the formation of phosphodiester linkages between 5'-phosphoryl and 3'-hydroxyl groups in double-stranded DNA using NAD as a coenzyme and as the energy source for the reaction. It is essential for DNA replication and repair of damaged DNA. The polypeptide is DNA ligase (Bacillus anthracis (strain A0248)).